The chain runs to 459 residues: Cyclic GMP-AMP synthase-like receptor 2 (459 aa).

Residues Ser-68 and 79–81 (EFD) each bind ATP. The Mg(2+) site is built by Glu-79, Asp-81, and Asp-199. Residues Asp-199 and 248-255 (RSSFYAVE) contribute to the GTP site. Position 252–255 (252–255 (YAVE)) interacts with ATP. His-263 provides a ligand contact to Zn(2+). ATP is bound by residues Lys-274 and 288–292 (SYYIK).

It belongs to the mab-21 family. Mg(2+) is required as a cofactor. Requires Mn(2+) as cofactor.

It catalyses the reaction GTP + ATP = 3',2'-cGAMP + 2 diphosphate. It carries out the reaction GTP + ATP = 2',3'-cGAMP + 2 diphosphate. The enzyme catalyses GTP + ATP = pppGp(2'-5')A + diphosphate. The catalysed reaction is pppA(2'-5')pG = 3',2'-cGAMP + diphosphate. It catalyses the reaction pppGp(2'-5')A = 2',3'-cGAMP + diphosphate. Its activity is regulated as follows. The enzyme activity is specifically activated by some nucleic acid. Its function is as follows. Nucleotidyltransferase that catalyzes the formation of cyclic GMP-AMP from ATP and GTP and plays a key role in antiviral innate immunity. Directly binds some unknown nucleic acid, activating the nucleotidyltransferase activity, leading to synthesis of both 3',2'-cGAMP and 2',3'-cGAMP second messengers. 3',2'-cGAMP and 2',3'-cGAMP bind to and activate Sting, thereby triggering the antiviral immune response via activation of the NF-kappa-B transcription factor Rel (Relish). The protein is Cyclic GMP-AMP synthase-like receptor 2 of Drosophila melanogaster (Fruit fly).